The primary structure comprises 500 residues: NAD(P)H-quinone oxidoreductase chain 4, chloroplastic (500 aa).

A run of 14 helical transmembrane segments spans residues 4–24 (FPWL…MLFL), 35–55 (YTIC…CYNF), 87–107 (IGTI…AFPV), 113–130 (LFHF…GSFS), 134–154 (LLLF…LLSM), 167–187 (FILY…GISL), 211–231 (ILFY…IPLH), 242–262 (HYST…YGLV), 272–292 (AHSM…IYAA), 305–325 (IAYS…SITD), 330–350 (GAIL…FLAG), 386–406 (LALP…GIIT), 416–436 (ILII…LLSM), and 462–482 (LFLS…PDFV).

Belongs to the complex I subunit 4 family.

It is found in the plastid. Its subcellular location is the chloroplast thylakoid membrane. The enzyme catalyses a plastoquinone + NADH + (n+1) H(+)(in) = a plastoquinol + NAD(+) + n H(+)(out). It carries out the reaction a plastoquinone + NADPH + (n+1) H(+)(in) = a plastoquinol + NADP(+) + n H(+)(out). The protein is NAD(P)H-quinone oxidoreductase chain 4, chloroplastic of Nasturtium officinale (Watercress).